The sequence spans 582 residues: SHC-transforming protein 2 (582 aa).

Disordered stretches follow at residues 1-24 (MTQGPGGRAPPAPPAPPEPEAPTT) and 47-70 (GPAAARAAGASGGADPQPEPAGPG). A compositionally biased stretch (pro residues) spans 8 to 20 (RAPPAPPAPPEPE). One can recognise a PID domain in the interval 147–329 (LGPGVSYVVR…AGPEESAWGD (183 aa)). The CH1 stretch occupies residues 330–486 (EEDSLEHNYY…PTEEQLRQEP (157 aa)). 3 positions are modified to phosphotyrosine: Tyr338, Tyr339, and Tyr414. The interval 460-481 (PLEDQWPSPPTRRAPVAPTEEQ) is disordered. An SH2 domain is found at 487 to 578 (WYHGRMSRRA…ESELHLRGVV (92 aa)).

As to quaternary structure, interacts with the Trk receptors in a phosphotyrosine-dependent manner and MEGF12. Once activated, binds to GRB2. Phosphorylated on tyrosines by the Trk receptors. In terms of tissue distribution, expressed in brain. Expressed at high level in the hypothalamus and at low level in the caudate nucleus.

Its function is as follows. Signaling adapter that couples activated growth factor receptors to signaling pathway in neurons. Involved in the signal transduction pathways of neurotrophin-activated Trk receptors in cortical neurons. The sequence is that of SHC-transforming protein 2 (SHC2) from Homo sapiens (Human).